Here is a 269-residue protein sequence, read N- to C-terminus: Sushi domain-containing protein 3 (269 aa).

Residues 1-23 (MRRTSATLRGRARPRWRAGNTTP) form a disordered region. Over 1–103 (MRRTSATLRG…VPPHETFGFK (103 aa)) the chain is Extracellular. Residues 30 to 93 (GTCAQLHPPP…WSSGSPVCKA (64 aa)) enclose the Sushi domain. 2 disulfide bridges follow: Cys32–Cys75 and Cys61–Cys91. The helical transmembrane segment at 104–124 (VAVIASIVSCAIILLMSMAFL) threads the bilayer. Topologically, residues 125–269 (TCCLLKCVQK…PGRPKVYLPG (145 aa)) are cytoplasmic. The interval 171 to 237 (NNSSSVGGGN…RMGTPGPGGC (67 aa)) is disordered. The segment covering 176–190 (VGGGNGGPSGGGGKP) has biased composition (gly residues).

It is found in the cell membrane. The chain is Sushi domain-containing protein 3 (Susd3) from Mus musculus (Mouse).